Consider the following 448-residue polypeptide: Zinc finger and BTB domain-containing protein 14 (448 aa).

One can recognise a BTB domain in the interval 36–102; it reads CDIAIVVEDV…MYTAKISVKK (67 aa). A Nuclear localization signal motif is present at residues 50-66; it reads HRCVLAACSTYFKKLFK. The disordered stretch occupies residues 130-193; that stretch reads VSSPEENTQS…QEDGKSPTTT (64 aa). The segment covering 156–167 has biased composition (acidic residues); the sequence is DTQDDEVEEIGD. 5 consecutive C2H2-type zinc fingers follow at residues 275 to 302, 303 to 330, 331 to 358, 359 to 386, and 387 to 415; these read IVCQ…ADRP, FVCE…GYKP, YSCE…NERP, FACH…GEKP, and FVCG…ERKQ. Positions 404–415 are enriched in basic and acidic residues; sequence RHENNMHSERKQ. The segment at 404–425 is disordered; that stretch reads RHENNMHSERKQVTTANSIQSE. Over residues 416–425 the composition is skewed to polar residues; sequence VTTANSIQSE.

This sequence belongs to the krueppel C2H2-type zinc-finger protein family. Interacts with ZBTB21.

It is found in the nucleus. In terms of biological role, transcriptional activator of the dopamine transporter (DAT), binding it's promoter at the consensus sequence 5'-CCTGCACAGTTCACGGA-3'. Binds to 5'-d(GCC)(n)-3' trinucleotide repeats in promoter regions and acts as a repressor of the FMR1 gene. Transcriptional repressor of MYC and thymidine kinase promoters. This Gallus gallus (Chicken) protein is Zinc finger and BTB domain-containing protein 14 (ZBTB14).